Reading from the N-terminus, the 146-residue chain is MKIMVINGPNLNLLGIREKEIYGAKDFNQVIDYIKEEGKELGLEVNCFQSNIEGEIINFIHNAYFEKYDGIIINPGAYTHYSIAIYDALKGVEIPTVEVHLSNIHKREEFRHKSVTAPACIGQISGFGEYGYIMAMNALKNHIKSK.

Tyr22 acts as the Proton acceptor in catalysis. Positions 74, 80, and 87 each coordinate substrate. His100 acts as the Proton donor in catalysis. Substrate is bound by residues 101 to 102 (LS) and Arg111.

Belongs to the type-II 3-dehydroquinase family. In terms of assembly, homododecamer.

It catalyses the reaction 3-dehydroquinate = 3-dehydroshikimate + H2O. The protein operates within metabolic intermediate biosynthesis; chorismate biosynthesis; chorismate from D-erythrose 4-phosphate and phosphoenolpyruvate: step 3/7. Its function is as follows. Catalyzes a trans-dehydration via an enolate intermediate. The chain is 3-dehydroquinate dehydratase from Clostridium perfringens (strain 13 / Type A).